Consider the following 152-residue polypeptide: 3-hydroxyacyl-[acyl-carrier-protein] dehydratase FabZ (152 aa).

The active site involves histidine 57.

It belongs to the thioester dehydratase family. FabZ subfamily.

The protein localises to the cytoplasm. It catalyses the reaction a (3R)-hydroxyacyl-[ACP] = a (2E)-enoyl-[ACP] + H2O. In terms of biological role, involved in unsaturated fatty acids biosynthesis. Catalyzes the dehydration of short chain beta-hydroxyacyl-ACPs and long chain saturated and unsaturated beta-hydroxyacyl-ACPs. This is 3-hydroxyacyl-[acyl-carrier-protein] dehydratase FabZ from Bradyrhizobium sp. (strain ORS 278).